Here is a 323-residue protein sequence, read N- to C-terminus: MQTNWQPTASIEQLRQRATLIAAIRQFFAERQVMEVDTPAMSHATVTDIHLHTFQTEFVGPGYADGSKLFFMTSPEFHMKRLLAAGSGCIYQINKAFRNEENGRYHNPEFTMLEWYRVGFDHHKLMDEMDDLLQLVLKCGAAQRMTYQQAFIDVLGVCPLEGSMTELKAAASKLGLSDIAEPEEDRDTLLQLLFSVGVENKIGQDVPAFVYDFPASQAALAKINPQDHRVADRFEVYFKGIELANGFHELDNPKEQLARFEQDNAKRIEMGLKPQPIDYHLISALEAGLPDCAGVALGIDRLIMLALGCDHIDQVTAFPFPIA.

Residue 74–76 coordinates substrate; the sequence is SPE. Residues 98–100 and asparagine 107 contribute to the ATP site; that span reads RNE. A substrate-binding site is contributed by tyrosine 116. 242 to 243 is a binding site for ATP; the sequence is EL. Glutamate 249 is a binding site for substrate. Glycine 298 is a binding site for ATP.

The protein belongs to the class-II aminoacyl-tRNA synthetase family. EpmA subfamily. As to quaternary structure, homodimer.

It carries out the reaction D-beta-lysine + L-lysyl-[protein] + ATP = N(6)-((3R)-3,6-diaminohexanoyl)-L-lysyl-[protein] + AMP + diphosphate + H(+). With EpmB is involved in the beta-lysylation step of the post-translational modification of translation elongation factor P (EF-P). Catalyzes the ATP-dependent activation of (R)-beta-lysine produced by EpmB, forming a lysyl-adenylate, from which the beta-lysyl moiety is then transferred to the epsilon-amino group of a conserved specific lysine residue in EF-P. This chain is Elongation factor P--(R)-beta-lysine ligase, found in Vibrio parahaemolyticus serotype O3:K6 (strain RIMD 2210633).